The following is a 154-amino-acid chain: Myoglobin (154 aa).

Positions 2 to 148 constitute a Globin domain; the sequence is GLSDGEWQLV…FRNDIAAKYK (147 aa). Phosphoserine is present on Ser-4. His-65 contacts nitrite. Residue His-65 coordinates O2. Thr-68 carries the phosphothreonine modification. His-94 contributes to the heme b binding site.

This sequence belongs to the globin family. Monomeric.

Its subcellular location is the cytoplasm. The protein localises to the sarcoplasm. It carries out the reaction Fe(III)-heme b-[protein] + nitric oxide + H2O = Fe(II)-heme b-[protein] + nitrite + 2 H(+). The catalysed reaction is H2O2 + AH2 = A + 2 H2O. Its function is as follows. Monomeric heme protein which primary function is to store oxygen and facilitate its diffusion within muscle tissues. Reversibly binds oxygen through a pentacoordinated heme iron and enables its timely and efficient release as needed during periods of heightened demand. Depending on the oxidative conditions of tissues and cells, and in addition to its ability to bind oxygen, it also has a nitrite reductase activity whereby it regulates the production of bioactive nitric oxide. Under stress conditions, like hypoxia and anoxia, it also protects cells against reactive oxygen species thanks to its pseudoperoxidase activity. This is Myoglobin (MB) from Meles meles (Eurasian badger).